Consider the following 30-residue polypeptide: V-type proton ATPase catalytic subunit A isoform 1 (30 aa).

The protein belongs to the ATPase alpha/beta chains family. As to quaternary structure, V-ATPase is a heteromultimeric enzyme composed of a peripheral catalytic V1 complex (main components: subunits A, B, C, D, E, and F) attached to an integral membrane V0 proton pore complex (main component: the proteolipid protein).

The catalysed reaction is ATP + H2O + 4 H(+)(in) = ADP + phosphate + 5 H(+)(out). In terms of biological role, catalytic subunit of the peripheral V1 complex of vacuolar ATPase. V-ATPase vacuolar ATPase is responsible for acidifying a variety of intracellular compartments in eukaryotic cells. The chain is V-type proton ATPase catalytic subunit A isoform 1 from Psilotum nudum (Whisk fern).